Here is a 373-residue protein sequence, read N- to C-terminus: Histidine protein methyltransferase 1 homolog (373 aa).

Residues 30 to 42 (SKESLVSERQKGT) show a composition bias toward basic and acidic residues. 2 disordered regions span residues 30–52 (SKES…STEQ) and 64–94 (KSER…HEEK). The segment covering 70–88 (APSQDPDSSFGAANSSSNL) has biased composition (polar residues). Phosphoserine occurs at positions 72 and 77. At histidine 154 the chain carries Tele-methylhistidine. Residues 168-172 (IWECT), glycine 195, and 216-218 (QDY) each bind S-adenosyl-L-methionine. The short motif at 247–253 (PDVKRLR) is the Nuclear localization signal element. Residues 269–271 (GEW) and serine 294 contribute to the S-adenosyl-L-methionine site.

This sequence belongs to the methyltransferase superfamily. METTL18 family. As to quaternary structure, interacts with GRWD1 and members of the heat shock protein 90 and 70 families; these proteins may possibly be methylation substrates for the enzyme. Monomethylated at His-154 through automethylation. Automethylation at His-154 positively regulates the methyltransferase activity toward RPL3. Probably methylated on other residues.

It localises to the cytoplasm. It is found in the cytosol. The protein localises to the nucleus. Its subcellular location is the nucleolus. It catalyses the reaction L-histidyl-[protein] + S-adenosyl-L-methionine = N(tele)-methyl-L-histidyl-[protein] + S-adenosyl-L-homocysteine + H(+). In terms of biological role, protein-L-histidine N-tele-methyltransferase that specifically monomethylates RPL3, thereby regulating translation elongation. Histidine methylation of RPL3 regulates translation elongation by slowing ribosome traversal on tyrosine codons: slower elongation provides enough time for proper folding of synthesized proteins and prevents cellular aggregation of tyrosine-rich proteins. The sequence is that of Histidine protein methyltransferase 1 homolog (METTL18) from Bos taurus (Bovine).